A 53-amino-acid chain; its full sequence is Large ribosomal subunit protein uL30 (53 aa).

The protein belongs to the universal ribosomal protein uL30 family. Part of the 50S ribosomal subunit.

This is Large ribosomal subunit protein uL30 from Deinococcus geothermalis (strain DSM 11300 / CIP 105573 / AG-3a).